A 332-amino-acid chain; its full sequence is Anthranilate phosphoribosyltransferase (332 aa).

5-phospho-alpha-D-ribose 1-diphosphate-binding positions include G78, 81-82 (GD), S86, 88-91 (NIST), 106-114 (KHGNKSITS), and S118. Residue G78 participates in anthranilate binding. Mg(2+) is bound at residue S90. N109 is a binding site for anthranilate. R163 is an anthranilate binding site. Residues D222 and E223 each coordinate Mg(2+).

It belongs to the anthranilate phosphoribosyltransferase family. Homodimer. Requires Mg(2+) as cofactor.

It carries out the reaction N-(5-phospho-beta-D-ribosyl)anthranilate + diphosphate = 5-phospho-alpha-D-ribose 1-diphosphate + anthranilate. Its pathway is amino-acid biosynthesis; L-tryptophan biosynthesis; L-tryptophan from chorismate: step 2/5. Its function is as follows. Catalyzes the transfer of the phosphoribosyl group of 5-phosphorylribose-1-pyrophosphate (PRPP) to anthranilate to yield N-(5'-phosphoribosyl)-anthranilate (PRA). The sequence is that of Anthranilate phosphoribosyltransferase from Staphylococcus aureus (strain USA300).